The sequence spans 342 residues: Cell division protein ZipA (342 aa).

Residues 1-6 lie on the Periplasmic side of the membrane; the sequence is MEDLQL. A helical transmembrane segment spans residues 7–27; the sequence is VLFILGAIAIVAVLVHGFWSI. Residues 28 to 342 lie on the Cytoplasmic side of the membrane; the sequence is RRQQPKSLKD…DYLHRIRANA (315 aa). Positions 33 to 57 are disordered; it reads KSLKDSPMGNFYKQQADKESPPKRV. The segment covering 47-57 has biased composition (basic and acidic residues); the sequence is QADKESPPKRV.

This sequence belongs to the ZipA family. As to quaternary structure, interacts with FtsZ via their C-terminal domains.

The protein localises to the cell inner membrane. Its function is as follows. Essential cell division protein that stabilizes the FtsZ protofilaments by cross-linking them and that serves as a cytoplasmic membrane anchor for the Z ring. Also required for the recruitment to the septal ring of downstream cell division proteins. The sequence is that of Cell division protein ZipA from Shewanella sp. (strain W3-18-1).